We begin with the raw amino-acid sequence, 273 residues long: Phosphatidylglycerol--prolipoprotein diacylglyceryl transferase (273 aa).

7 helical membrane-spanning segments follow: residues 21–41 (VSIRWYGLMYLVGFMFALWLA), 60–80 (LLFAGFLGVVIGGRVGYVIFY), 95–115 (VWTGGMSFHGGLLGVITAMFW), 124–144 (FFGVADFVAPLVPFGLGMGRM), 176–196 (SQLYEMLLEGVVLFFILNWFI), 203–223 (GSVSGLFLAGYGTFRFLVEFV), and 237–257 (ISMGQILSMPMIVLGILMMVW). R143 contributes to the a 1,2-diacyl-sn-glycero-3-phospho-(1'-sn-glycerol) binding site.

This sequence belongs to the Lgt family.

It is found in the cell inner membrane. It catalyses the reaction L-cysteinyl-[prolipoprotein] + a 1,2-diacyl-sn-glycero-3-phospho-(1'-sn-glycerol) = an S-1,2-diacyl-sn-glyceryl-L-cysteinyl-[prolipoprotein] + sn-glycerol 1-phosphate + H(+). It participates in protein modification; lipoprotein biosynthesis (diacylglyceryl transfer). Its function is as follows. Catalyzes the transfer of the diacylglyceryl group from phosphatidylglycerol to the sulfhydryl group of the N-terminal cysteine of a prolipoprotein, the first step in the formation of mature lipoproteins. The sequence is that of Phosphatidylglycerol--prolipoprotein diacylglyceryl transferase from Vibrio parahaemolyticus serotype O3:K6 (strain RIMD 2210633).